Reading from the N-terminus, the 147-residue chain is MTLRLNDLKPADGARTERTRVGRGIGSGLGKTAGRGHKGSFARKGGGKIKAGFEGGQTPMQRRLPKIGFRSKMARDTAEVLSYQLDKLDAGDVDFAALRAANLVPSRAKKAKVVLKGELSKKFVLKGVAATAGAKAAIEAAGGSVEE.

Basic and acidic residues predominate over residues 1-20 (MTLRLNDLKPADGARTERTR). The interval 1–61 (MTLRLNDLKP…GFEGGQTPMQ (61 aa)) is disordered. Residues 23-33 (RGIGSGLGKTA) show a composition bias toward gly residues. Over residues 34 to 47 (GRGHKGSFARKGGG) the composition is skewed to basic residues.

Belongs to the universal ribosomal protein uL15 family. Part of the 50S ribosomal subunit.

Its function is as follows. Binds to the 23S rRNA. The protein is Large ribosomal subunit protein uL15 of Xanthomonas euvesicatoria pv. vesicatoria (strain 85-10) (Xanthomonas campestris pv. vesicatoria).